We begin with the raw amino-acid sequence, 412 residues long: Serine hydroxymethyltransferase 1 (412 aa).

(6S)-5,6,7,8-tetrahydrofolate contacts are provided by residues leucine 116 and 120–122; that span reads GHL. Position 225 is an N6-(pyridoxal phosphate)lysine (lysine 225).

Belongs to the SHMT family. In terms of assembly, homodimer. Pyridoxal 5'-phosphate serves as cofactor.

It is found in the cytoplasm. It carries out the reaction (6R)-5,10-methylene-5,6,7,8-tetrahydrofolate + glycine + H2O = (6S)-5,6,7,8-tetrahydrofolate + L-serine. It participates in one-carbon metabolism; tetrahydrofolate interconversion. Its pathway is amino-acid biosynthesis; glycine biosynthesis; glycine from L-serine: step 1/1. Functionally, catalyzes the reversible interconversion of serine and glycine with tetrahydrofolate (THF) serving as the one-carbon carrier. This reaction serves as the major source of one-carbon groups required for the biosynthesis of purines, thymidylate, methionine, and other important biomolecules. Also exhibits THF-independent aldolase activity toward beta-hydroxyamino acids, producing glycine and aldehydes, via a retro-aldol mechanism. The polypeptide is Serine hydroxymethyltransferase 1 (Pseudomonas fluorescens (strain Pf0-1)).